Consider the following 1008-residue polypeptide: Collagen, type I, alpha 1a (1008 aa).

Over residues 1–21 the composition is skewed to pro residues; the sequence is SPAMPVPGPMGPMGPRGPPGS. The segment at 1–920 is disordered; sequence SPAMPVPGPM…PQEKAPDPFR (920 aa). The segment covering 39–53 has biased composition (basic and acidic residues); the sequence is NGEDGESGKPGRGGE. Positions 92–117 are enriched in low complexity; that stretch reads TPGAMGPRGAAGAAGARGNDGAAGAA. The segment covering 119-132 has biased composition (pro residues); it reads PPGPTGPAGPPGFP. Over residues 133 to 151 the composition is skewed to gly residues; it reads GGPGAKGDAGAQGGRGPEG. Composition is skewed to low complexity over residues 152–195 and 204–230; these read PAGA…AGAP and SGPQ…APGV. The segment covering 253–265 has biased composition (gly residues); sequence GARGGPGGRGFPG. 2 stretches are compositionally biased toward low complexity: residues 339-354 and 410-422; these read VGAR…PGPK and LPGE…PAGA. A compositionally biased stretch (basic and acidic residues) spans 423 to 435; it reads RGDRGFPGERGAK. Low complexity-rich tracts occupy residues 437-456, 489-524, and 537-573; these read DAGA…QGMP, RGLT…ARGA, and AGFA…AGPT. The span at 604–617 shows a compositional bias: pro residues; that stretch reads PPGPSGNPGPPGPA. The segment covering 634–661 has biased composition (low complexity); sequence PAGRPGELGAAGPPGPAGEKGSPGSEGA. A compositionally biased stretch (gly residues) spans 696–709; that stretch reads GEAGGPSGPGGERG. The span at 717–735 shows a compositional bias: low complexity; the sequence is PGLAGAPGEPGREGSPGNE. Residues 761–771 are compositionally biased toward pro residues; sequence APGPPGAPGPV. Residues 785–806 show a composition bias toward low complexity; that stretch reads PAGPAGSAGPSGPRGPAGAPGL. Basic and acidic residues predominate over residues 807–821; that stretch reads RGDKGESGEAGERRG. Over residues 832 to 868 the composition is skewed to low complexity; the sequence is SGSSGEQGPAGAAGPAGPRGPAGSAGSPGKDGMSGLP. Over residues 884–896 the composition is skewed to pro residues; sequence AGPPGPPGPPGAP. A Fibrillar collagen NC1 domain is found at 978-1008; it reads TSRLPLLDLAPMDVGAPDQEFGLEVGPVCFL.

This sequence belongs to the fibrillar collagen family.

It localises to the secreted. It is found in the extracellular space. Its subcellular location is the extracellular matrix. The chain is Collagen, type I, alpha 1a from Epinephelus aeneus (White grouper).